Consider the following 420-residue polypeptide: Homeobox-containing protein 1 (420 aa).

Residues D18 to T49 form the HNF-p1 domain. The tract at residues E56–A139 is disordered. K60 participates in a covalent cross-link: Glycyl lysine isopeptide (Lys-Gly) (interchain with G-Cter in SUMO2). Low complexity-rich tracts occupy residues R64–G73 and A81–Q93. Residues H94–M132 are compositionally biased toward polar residues. K131 participates in a covalent cross-link: Glycyl lysine isopeptide (Lys-Gly) (interchain with G-Cter in SUMO2). The POU-specific atypical domain occupies R145 to A241. S148 carries the post-translational modification Phosphoserine. Residue K161 forms a Glycyl lysine isopeptide (Lys-Gly) (interchain with G-Cter in SUMO2) linkage. A Phosphoserine modification is found at S170. Glycyl lysine isopeptide (Lys-Gly) (interchain with G-Cter in SUMO2) cross-links involve residues K174, K217, and K310. Positions R267–A341 form a DNA-binding region, homeobox. Residues I353–Q385 form a disordered region. Residues D365 to D377 are compositionally biased toward acidic residues. K413 participates in a covalent cross-link: Glycyl lysine isopeptide (Lys-Gly) (interchain with G-Cter in SUMO1); alternate. A Glycyl lysine isopeptide (Lys-Gly) (interchain with G-Cter in SUMO2); alternate cross-link involves residue K413.

As to quaternary structure, associates with the telomerase holoenzyme complex. Interacts with DKC1, XRCC6 and COIL. Ubiquitous. Detected in pancreas, brain, spleen, placenta, prostate, thymus, liver, heart, bone marrow, skeletal muscle, stomach, uterus, testis, kidney, ovary, colon, lung, cardiac muscle and thyroid gland.

The protein resides in the nucleus. The protein localises to the cytoplasm. Its subcellular location is the chromosome. It localises to the telomere. It is found in the cajal body. The protein resides in the PML body. Functionally, binds directly to 5'-TTAGGG-3' repeats in telomeric DNA. Associates with the telomerase complex at sites of active telomere processing and positively regulates telomere elongation. Important for TERT binding to chromatin, indicating a role in recruitment of the telomerase complex to telomeres. Also plays a role in the alternative lengthening of telomeres (ALT) pathway in telomerase-negative cells where it promotes formation and/or maintenance of ALT-associated promyelocytic leukemia bodies (APBs). Enhances formation of telomere C-circles in ALT cells, suggesting a possible role in telomere recombination. Might also be involved in the DNA damage response at telomeres. This chain is Homeobox-containing protein 1, found in Homo sapiens (Human).